A 65-amino-acid chain; its full sequence is DNA-directed RNA polymerase subunit Rpo10 (65 aa).

Zn(2+)-binding residues include C7, C10, C44, and C45.

Belongs to the archaeal Rpo10/eukaryotic RPB10 RNA polymerase subunit family. As to quaternary structure, part of the RNA polymerase complex. Zn(2+) serves as cofactor.

Its subcellular location is the cytoplasm. It is found in the chromosome. It catalyses the reaction RNA(n) + a ribonucleoside 5'-triphosphate = RNA(n+1) + diphosphate. DNA-dependent RNA polymerase (RNAP) catalyzes the transcription of DNA into RNA using the four ribonucleoside triphosphates as substrates. This Thermococcus kodakarensis (strain ATCC BAA-918 / JCM 12380 / KOD1) (Pyrococcus kodakaraensis (strain KOD1)) protein is DNA-directed RNA polymerase subunit Rpo10.